A 946-amino-acid polypeptide reads, in one-letter code: Protein TMA108 (946 aa).

N-acetylserine is present on serine 2. 293 to 297 (MAMEN) lines the substrate pocket. Residue histidine 330 coordinates Zn(2+). The active-site Proton acceptor is glutamate 331. Zn(2+) contacts are provided by histidine 334 and glutamate 353.

Belongs to the peptidase M1 family. As to quaternary structure, associates with ribosomal complexes. It depends on Zn(2+) as a cofactor.

It is found in the cytoplasm. Its function is as follows. Putative zinc aminopeptidase which may be involved in ribosome biogenesis. In Saccharomyces cerevisiae (strain ATCC 204508 / S288c) (Baker's yeast), this protein is Protein TMA108 (TMA108).